The sequence spans 616 residues: Matrix metalloproteinase-21 (616 aa).

An N-terminal signal peptide occupies residues 1–22 (MPTAPALGALLLLLGALTPGHQ). Residues 23–192 (EKLFHSRDHS…TSTSKIRKKR (170 aa)) constitute a propeptide that is removed on maturation. Positions 139 to 146 (PRCGVPDN) match the Cysteine switch motif. Position 141 (cysteine 141) interacts with Zn(2+). Positions 157–186 (SNSNNVTEKASGKSLNTTTNQNPENGTSTS) are disordered. 3 N-linked (GlcNAc...) asparagine glycosylation sites follow: asparagine 161, asparagine 172, and asparagine 181. Residue histidine 329 participates in Zn(2+) binding. Glutamate 330 is a catalytic residue. Residues histidine 333 and histidine 339 each coordinate Zn(2+). Cysteine 375 and cysteine 606 are oxidised to a cystine. Hemopexin repeat units follow at residues 376–435 (EGSF…WHGI), 437–493 (AEGI…FPKI), 494–542 (PSPI…FPAV), and 549–605 (FGNI…WTDI). N-linked (GlcNAc...) asparagine glycosylation occurs at asparagine 418. Residue asparagine 597 is glycosylated (N-linked (GlcNAc...) asparagine).

The protein belongs to the peptidase M10A family. It depends on Zn(2+) as a cofactor. The cofactor is Ca(2+). In terms of processing, the precursor is cleaved by a furin endopeptidase.

The protein localises to the secreted. Functionally, may play a role in gastrulation-related cell movement. Plays a specialized role in the generation of left-right asymmetry during embryogenesis. May act as a negative regulator of the NOTCH-signaling pathway. The chain is Matrix metalloproteinase-21 (MMP21) from Cynops pyrrhogaster (Japanese fire-bellied newt).